The sequence spans 242 residues: Octanoyltransferase (242 aa).

One can recognise a BPL/LPL catalytic domain in the interval 31-206 (SQTTDEIWFL…LFLKNFGYNQ (176 aa)). Substrate is bound by residues 70-77 (RGGQVTYH), 137-139 (SIG), and 150-152 (GLA). The active-site Acyl-thioester intermediate is the cysteine 168.

Belongs to the LipB family.

The protein localises to the cytoplasm. It carries out the reaction octanoyl-[ACP] + L-lysyl-[protein] = N(6)-octanoyl-L-lysyl-[protein] + holo-[ACP] + H(+). The protein operates within protein modification; protein lipoylation via endogenous pathway; protein N(6)-(lipoyl)lysine from octanoyl-[acyl-carrier-protein]: step 1/2. Functionally, catalyzes the transfer of endogenously produced octanoic acid from octanoyl-acyl-carrier-protein onto the lipoyl domains of lipoate-dependent enzymes. Lipoyl-ACP can also act as a substrate although octanoyl-ACP is likely to be the physiological substrate. The polypeptide is Octanoyltransferase (Coxiella burnetii (strain CbuG_Q212) (Coxiella burnetii (strain Q212))).